Consider the following 244-residue polypeptide: LexA repressor (244 aa).

A disordered region spans residues 1–24 (MSDSSDTTVDGASDGASDGASGAD). Residues 10 to 24 (DGASDGASDGASGAD) show a composition bias toward low complexity. Residues 58 to 78 (IREIGDAVGLTSTSSVAHQLR) constitute a DNA-binding region (H-T-H motif). Active-site for autocatalytic cleavage activity residues include S168 and K205.

This sequence belongs to the peptidase S24 family. In terms of assembly, homodimer.

It catalyses the reaction Hydrolysis of Ala-|-Gly bond in repressor LexA.. Represses a number of genes involved in the response to DNA damage (SOS response), including recA and lexA. In the presence of single-stranded DNA, RecA interacts with LexA causing an autocatalytic cleavage which disrupts the DNA-binding part of LexA, leading to derepression of the SOS regulon and eventually DNA repair. The sequence is that of LexA repressor from Mycobacterium ulcerans (strain Agy99).